The sequence spans 146 residues: uncharacterized protein (146 aa).

This is an uncharacterized protein from Bacillus subtilis (strain 168).